The primary structure comprises 166 residues: Small ribosomal subunit protein uS4 (166 aa).

An S4 RNA-binding domain is found at 103 to 165 (RRLQTVVYKK…PTSPYFKKAQ (63 aa)).

This sequence belongs to the universal ribosomal protein uS4 family. As to quaternary structure, part of the 30S ribosomal subunit. Contacts protein S5. The interaction surface between S4 and S5 is involved in control of translational fidelity.

Functionally, one of the primary rRNA binding proteins, it binds directly to 16S rRNA where it nucleates assembly of the body of the 30S subunit. Its function is as follows. With S5 and S12 plays an important role in translational accuracy. The protein is Small ribosomal subunit protein uS4 of Ignicoccus hospitalis (strain KIN4/I / DSM 18386 / JCM 14125).